Reading from the N-terminus, the 262-residue chain is Hydroxyethylthiazole kinase (262 aa).

Position 39 (methionine 39) interacts with substrate. ATP contacts are provided by lysine 115 and threonine 160. Glycine 187 is a substrate binding site.

This sequence belongs to the Thz kinase family. It depends on Mg(2+) as a cofactor.

It catalyses the reaction 5-(2-hydroxyethyl)-4-methylthiazole + ATP = 4-methyl-5-(2-phosphooxyethyl)-thiazole + ADP + H(+). The protein operates within cofactor biosynthesis; thiamine diphosphate biosynthesis; 4-methyl-5-(2-phosphoethyl)-thiazole from 5-(2-hydroxyethyl)-4-methylthiazole: step 1/1. Its function is as follows. Catalyzes the phosphorylation of the hydroxyl group of 4-methyl-5-beta-hydroxyethylthiazole (THZ). In Staphylococcus epidermidis (strain ATCC 35984 / DSM 28319 / BCRC 17069 / CCUG 31568 / BM 3577 / RP62A), this protein is Hydroxyethylthiazole kinase.